A 950-amino-acid polypeptide reads, in one-letter code: MSIGRYTRLDEIGRGSFATVYQGVHTKTRTYVAIKSVNLSKLNKKLKDNLSSEIHILKGLYHPHIVALIDCHETTSHIHLVMEYCALGDLSLFIKRRDTLGDHRYTRDMIAKYPNPPGGALNEVVVRHFLKQLASALKFLRDRNLIHRDIKPQNLLLCPSPSSYRSGVTQVVPFKGSEDSFNPATGLESLPLLKIADFGFARSLPATSLAETLCGSPLYMAPEILRYEKYDAKADLWSVGTVLYEMVVGKPPFRATNHVELLRKIEKGEDRIKFPEENPASDEIKALIRALLKRNPVERLNFPDFFENGVITSPIPGLVADDQPSIPRDPPADPETAESTPRPDSRSGAIVPGGTEREREVSYLPKGDTGLTQRPPSQNQRFGTPPTTTHMRRIGSGDRPPSTPKELTPPMTYPQRPSAVSHATAPGRQELVDRNAAFTAMERQRGRNTFSEGSPQTDRQADKLREERERAAQDVAFERDYVVVEKRAVEVNAFADELAHSPRIQGGISRGAQTGALSRRSTVHGPTPLNPSPPQATVGKAMQVLSGRSRADSMHNRQSSYERRYGQSPTSATSAISKALNMASGRLFGMGFSPPLAITKGGRSPPLAYNPFPAYPAHGSLMIGDGAKNNVALDEDTKTVQILEECATRSDVVYGFAEVKYKQLVPLAPSVQTDPSSKGNLAGERENPDSADGGLTVDAIVTLSEEALVLYVKALSLLAKSMDIAGAWWARKNRGDGFGDSAMSRADGASTLAGTRINNVVQWVRNRFNEVLEKGEFVRLKLIEAQKRLPPDHPSHPDNHSVGSSLGSGASVDVVVSPGVSAEKLMYDRALEMSRTAAINELTGEDLSGCEIAYVTAIRMLEAVLENGEVPRFGQGKDDTSKDSDKIVLDAVQAEERQVVIKLVSSIRSRLAALRKKLAILAKRAPTPSANVPSKMAPLNPVSVGATPPK.

In terms of domain architecture, Protein kinase spans 6–311; sequence YTRLDEIGRG…FPDFFENGVI (306 aa). ATP is bound by residues 12–20 and Lys-35; that span reads IGRGSFATV. Asp-149 (proton acceptor) is an active-site residue. Disordered stretches follow at residues 314 to 425, 443 to 467, 505 to 570, 671 to 690, and 926 to 950; these read PIPG…HATA, RQRG…LREE, QGGI…QSPT, VQTD…NPDS, and PTPS…TPPK. Polar residues-rich tracts occupy residues 370-389, 447-458, and 511-520; these read GLTQ…PTTT, RNTFSEGSPQTD, and GAQTGALSRR. The segment covering 549–565 has biased composition (basic and acidic residues); it reads SRADSMHNRQSSYERRY.

The protein belongs to the protein kinase superfamily. Ser/Thr protein kinase family. APG1/unc-51/ULK1 subfamily. As to quaternary structure, homodimer. Forms a ternary complex with ATG13 and ATG17.

It localises to the cytoplasm. It is found in the preautophagosomal structure membrane. It carries out the reaction L-seryl-[protein] + ATP = O-phospho-L-seryl-[protein] + ADP + H(+). It catalyses the reaction L-threonyl-[protein] + ATP = O-phospho-L-threonyl-[protein] + ADP + H(+). Functionally, serine/threonine protein kinase involved in the cytoplasm to vacuole transport (Cvt) and found to be essential in autophagy, where it is required for the formation of autophagosomes. Involved in the clearance of protein aggregates which cannot be efficiently cleared by the proteasome. Required for selective autophagic degradation of the nucleus (nucleophagy) as well as for mitophagy which contributes to regulate mitochondrial quantity and quality by eliminating the mitochondria to a basal level to fulfill cellular energy requirements and preventing excess ROS production. Also involved in endoplasmic reticulum-specific autophagic process, in selective removal of ER-associated degradation (ERAD) substrates. Plays a key role in ATG9 and ATG23 cycling through the pre-autophagosomal structure and is necessary to promote ATG18 binding to ATG9 through phosphorylation of ATG9. Catalyzes phosphorylation of ATG4, decreasing the interaction between ATG4 and ATG8 and impairing deconjugation of PE-conjugated forms of ATG8. This chain is Serine/threonine-protein kinase atg1, found in Neosartorya fischeri (strain ATCC 1020 / DSM 3700 / CBS 544.65 / FGSC A1164 / JCM 1740 / NRRL 181 / WB 181) (Aspergillus fischerianus).